The primary structure comprises 300 residues: Transacylase cctO (300 aa).

A helical membrane pass occupies residues 52–72; it reads IVYVSLTFFVVSIGLNFILAI. 2 consecutive short sequence motifs (HXXHC) follow at residues 185–189 and 225–229; these read HQLGC and HVDQC. N-linked (GlcNAc...) asparagine glycosylation is present at Asn-270.

The protein belongs to the ustYa family.

Its subcellular location is the membrane. Its pathway is mycotoxin biosynthesis. In terms of biological role, transacylase; part of the gene cluster that mediates the biosynthesis of the mycotoxin cyclochlorotine, a hepatotoxic and carcinogenic cyclic chlorinated pentapeptide. Within the pathway, cctO catalyzes the intramolecular O,N-transacylation from isocyclochlorotine to cyclochlorotine. The NRPS cctN initially catalyzes the condensation of L-serine (Ser), Pro, L-2-aminobutyrate (2Abu), Ser, and beta-Phe in this order to produce isocyclotine. After the dichlorination of Pro2 catalyzed by cctP2 to produce isocyclochlorotine, the cctO-mediated transacylation of isocyclochlorotine can furnish cyclochlorotine. The subsequent hydroxylation of cyclochlorotine by cctR yields hydroxycyclochlorotine as the final product. CctP1 probably acts as a phenylalanine aminomutase and provides the uncommon building block beta-Phe. Furthermore, 2Abu can be synthesized from threonine by one of the threonine dehydratases and transaminases localized outside of the cluster. The functions of the remaining proteins encoded by the cluster, cctM and cctT, have not been identified yet. The protein is Transacylase cctO of Talaromyces islandicus (Penicillium islandicum).